Reading from the N-terminus, the 72-residue chain is Translation initiation factor IF-1 (72 aa).

The 72-residue stretch at 1–72 folds into the S1-like domain; it reads MARDDVIEVD…DKGRITFRYK (72 aa).

It belongs to the IF-1 family. In terms of assembly, component of the 30S ribosomal translation pre-initiation complex which assembles on the 30S ribosome in the order IF-2 and IF-3, IF-1 and N-formylmethionyl-tRNA(fMet); mRNA recruitment can occur at any time during PIC assembly.

The protein resides in the cytoplasm. Functionally, one of the essential components for the initiation of protein synthesis. Stabilizes the binding of IF-2 and IF-3 on the 30S subunit to which N-formylmethionyl-tRNA(fMet) subsequently binds. Helps modulate mRNA selection, yielding the 30S pre-initiation complex (PIC). Upon addition of the 50S ribosomal subunit IF-1, IF-2 and IF-3 are released leaving the mature 70S translation initiation complex. The protein is Translation initiation factor IF-1 of Helicobacter pylori (strain HPAG1).